A 345-amino-acid chain; its full sequence is Dihydroorotase (345 aa).

2 residues coordinate Zn(2+): H13 and H15. Residues 15-17 (HLR) and N41 contribute to the substrate site. K99, H136, and H174 together coordinate Zn(2+). An N6-carboxylysine modification is found at K99. H136 lines the substrate pocket. L219 contacts substrate. Position 247 (D247) interacts with Zn(2+). The active site involves D247. Substrate-binding residues include H251 and A263.

The protein belongs to the metallo-dependent hydrolases superfamily. DHOase family. Class II DHOase subfamily. As to quaternary structure, homodimer. Zn(2+) is required as a cofactor.

It catalyses the reaction (S)-dihydroorotate + H2O = N-carbamoyl-L-aspartate + H(+). It participates in pyrimidine metabolism; UMP biosynthesis via de novo pathway; (S)-dihydroorotate from bicarbonate: step 3/3. Functionally, catalyzes the reversible cyclization of carbamoyl aspartate to dihydroorotate. This is Dihydroorotase from Hahella chejuensis (strain KCTC 2396).